The sequence spans 339 residues: Phosphate acyltransferase (339 aa).

The protein belongs to the PlsX family. Homodimer. Probably interacts with PlsY.

Its subcellular location is the cytoplasm. The enzyme catalyses a fatty acyl-[ACP] + phosphate = an acyl phosphate + holo-[ACP]. The protein operates within lipid metabolism; phospholipid metabolism. In terms of biological role, catalyzes the reversible formation of acyl-phosphate (acyl-PO(4)) from acyl-[acyl-carrier-protein] (acyl-ACP). This enzyme utilizes acyl-ACP as fatty acyl donor, but not acyl-CoA. In Brachyspira hyodysenteriae (strain ATCC 49526 / WA1), this protein is Phosphate acyltransferase.